A 467-amino-acid polypeptide reads, in one-letter code: Argininosuccinate lyase (467 aa).

It belongs to the lyase 1 family. Argininosuccinate lyase subfamily.

It is found in the cytoplasm. The enzyme catalyses 2-(N(omega)-L-arginino)succinate = fumarate + L-arginine. It participates in amino-acid biosynthesis; L-arginine biosynthesis; L-arginine from L-ornithine and carbamoyl phosphate: step 3/3. The polypeptide is Argininosuccinate lyase (Anaeromyxobacter dehalogenans (strain 2CP-C)).